The chain runs to 229 residues: Rhamnosyl O-methyltransferase (229 aa).

A signal peptide spans 1 to 23; it reads MERVRQMFSCVSGMIYRPTDSIA.

This sequence belongs to the rhamnosyl O-methyltransferase family.

Its function is as follows. Catalyzes the O-methylation of the hydroxyl group located on C-2 of the first rhamnosyl residue linked to the phenolic group of glycosylated phenolphthiocerol dimycocerosates (PGL) and p-hydroxybenzoic acid derivatives (p-HBAD). The chain is Rhamnosyl O-methyltransferase from Mycobacterium leprae (strain TN).